The chain runs to 152 residues: Succinate dehydrogenase [ubiquinone] cytochrome b small subunit A, mitochondrial (152 aa).

The N-terminal 21 residues, 1–21 (MVTVLRLSSLCRANRASAFKS), are a transit peptide targeting the mitochondrion. Residues 22-56 (LLIRPVPCLSQDLHTVQTSQIHTSQNHHAASKAAS) are Mitochondrial matrix-facing. Residues 57 to 78 (LHWTSERALSVALLGLLPAAYL) traverse the membrane as a helical segment. The Mitochondrial intermembrane segment spans residues 79 to 83 (YPGAA). A helical transmembrane segment spans residues 84 to 104 (VDYSLAAALTLHGHWGLGQVV). H95 provides a ligand contact to heme b. Residues 105-113 (TDYVHGDAK) lie on the Mitochondrial matrix side of the membrane. Y107 lines the a ubiquinone pocket. Residues 114–135 (IKLANTSLFALSALTFAGLCYF) traverse the membrane as a helical segment. The Mitochondrial intermembrane segment spans residues 136 to 152 (NYHDVGICKAVAMLWSL).

Belongs to the CybS family. In terms of assembly, component of complex II composed of four subunits: the flavoprotein (FP) SDHA, iron-sulfur protein (IP) SDHB, and a cytochrome b560 composed of SDHC and SDHD.

It is found in the mitochondrion inner membrane. It functions in the pathway carbohydrate metabolism; tricarboxylic acid cycle. Membrane-anchoring subunit of succinate dehydrogenase (SDH) that is involved in complex II of the mitochondrial electron transport chain and is responsible for transferring electrons from succinate to ubiquinone (coenzyme Q). SDH also oxidizes malate to the non-canonical enol form of oxaloacetate, enol-oxaloacetate. Enol-oxaloacetate, which is a potent inhibitor of the succinate dehydrogenase activity, is further isomerized into keto-oxaloacetate. The protein is Succinate dehydrogenase [ubiquinone] cytochrome b small subunit A, mitochondrial (sdhd-a) of Xenopus laevis (African clawed frog).